The following is a 379-amino-acid chain: Cytochrome b (379 aa).

A run of 4 helical transmembrane segments spans residues phenylalanine 33–methionine 53, tryptophan 77–valine 98, tryptophan 113–leucine 133, and phenylalanine 178–leucine 198. Residues histidine 83 and histidine 97 each contribute to the heme b site. Positions 182 and 196 each coordinate heme b. An a ubiquinone-binding site is contributed by histidine 201. The next 4 membrane-spanning stretches (helical) occupy residues isoleucine 226–phenylalanine 246, leucine 288–asparagine 308, isoleucine 320–glycine 340, and phenylalanine 347–proline 367.

It belongs to the cytochrome b family. As to quaternary structure, the cytochrome bc1 complex contains 11 subunits: 3 respiratory subunits (MT-CYB, CYC1 and UQCRFS1), 2 core proteins (UQCRC1 and UQCRC2) and 6 low-molecular weight proteins (UQCRH/QCR6, UQCRB/QCR7, UQCRQ/QCR8, UQCR10/QCR9, UQCR11/QCR10 and a cleavage product of UQCRFS1). This cytochrome bc1 complex then forms a dimer. The cofactor is heme b.

It is found in the mitochondrion inner membrane. Component of the ubiquinol-cytochrome c reductase complex (complex III or cytochrome b-c1 complex) that is part of the mitochondrial respiratory chain. The b-c1 complex mediates electron transfer from ubiquinol to cytochrome c. Contributes to the generation of a proton gradient across the mitochondrial membrane that is then used for ATP synthesis. The protein is Cytochrome b (MT-CYB) of Necromys amoenus (Pleasant bolo mouse).